The primary structure comprises 176 residues: Putative L,D-transpeptidase YqjB (176 aa).

An N-terminal signal peptide occupies residues 1–25 (MRFFLCSIFMMISPIWPLGENPLPG). Positions 27 to 151 (PYVIVNKRTN…IPVGTRVLIT (125 aa)) constitute a L,D-TPase catalytic domain. His-111 acts as the Proton donor/acceptor in catalysis. Residue Cys-127 is the Nucleophile of the active site.

This sequence belongs to the YkuD family.

It participates in cell wall biogenesis; peptidoglycan biosynthesis. This chain is Putative L,D-transpeptidase YqjB (yqjB), found in Bacillus subtilis (strain 168).